Reading from the N-terminus, the 85-residue chain is UPF0335 protein Atu3758 (85 aa).

The protein belongs to the UPF0335 family.

This is UPF0335 protein Atu3758 from Agrobacterium fabrum (strain C58 / ATCC 33970) (Agrobacterium tumefaciens (strain C58)).